The following is an 843-amino-acid chain: Vacuolar membrane protease (843 aa).

Topologically, residues 1-16 (MTNSRRHIFERICAKA) are cytoplasmic. The chain crosses the membrane as a helical span at residues 17 to 37 (FQSSLTCSIFGFTVLLILYLL). The Vacuolar portion of the chain corresponds to 38-347 (DWKRIAQVPG…LAFGKYWQLN (310 aa)). N-linked (GlcNAc...) asparagine glycosylation is found at asparagine 96, asparagine 109, and asparagine 117. 2 residues coordinate Zn(2+): histidine 147 and aspartate 159. The Proton acceptor role is filled by glutamate 191. Glutamate 192 lines the Zn(2+) pocket. Asparagine 209 carries an N-linked (GlcNAc...) asparagine glycan. Residue glutamate 217 coordinates Zn(2+). An N-linked (GlcNAc...) asparagine glycan is attached at asparagine 275. Histidine 292 contributes to the Zn(2+) binding site. Asparagine 322 carries N-linked (GlcNAc...) asparagine glycosylation. A helical membrane pass occupies residues 348-368 (LPIYQVLNIIFAVICPIVLLL). Residues 369 to 386 (TLIRFPSLYEQLKKPRYT) are Cytoplasmic-facing. Residues 387 to 407 (VCFVVSCIFVSIFDTLTVLLL) traverse the membrane as a helical segment. The Vacuolar portion of the chain corresponds to 408-417 (TWINPYVINS). Residues 418 to 438 (HTGLILALFYLTNLIALAFSF) traverse the membrane as a helical segment. Over 439–456 (RAAATHSKLSSEDLSSIE) the chain is Cytoplasmic. A helical membrane pass occupies residues 457 to 477 (IVFIWYAQILWYLVFIVSVIL). Residues 478 to 484 (SIYFQLG) are Vacuolar-facing. Residues 485-505 (STYWVTLSYLCTFTCCIMTII) form a helical membrane-spanning segment. Over 506–566 (RINYFVDNVV…NRAHVKLIDN (61 aa)) the chain is Cytoplasmic. Residues 567 to 587 (IWTVIYFIFNVPFPVFLCYDI) traverse the membrane as a helical segment. At 588 to 608 (LVETILPAGSQTLTDSVFSSK) the chain is on the vacuolar side. The chain crosses the membrane as a helical span at residues 609–629 (LYKLVIFVVFLSLVNSGPFIF). Topologically, residues 630 to 636 (RALSKKS) are cytoplasmic. The helical transmembrane segment at 637–657 (LAVLTMLWITLFVQALSVNPF) threads the bilayer. Topologically, residues 658 to 843 (TESAPLKLSF…LLKVKSSIVI (186 aa)) are vacuolar. 5 N-linked (GlcNAc...) asparagine glycosylation sites follow: asparagine 677, asparagine 703, asparagine 707, asparagine 754, and asparagine 788.

Belongs to the peptidase M28 family. Zn(2+) serves as cofactor.

Its subcellular location is the membrane. It localises to the vacuole membrane. Functionally, may be involved in vacuolar sorting and osmoregulation. This chain is Vacuolar membrane protease, found in Schizosaccharomyces pombe (strain 972 / ATCC 24843) (Fission yeast).